The sequence spans 182 residues: Hexose transport activator protein (182 aa).

A disordered region spans residues 46-65; sequence GIWGPMEKKPGGVGKKKGSE.

Functionally, multicopy expression suppresses glucose-uptake defects in various yeast mutants. In Saccharomyces cerevisiae (strain ATCC 204508 / S288c) (Baker's yeast), this protein is Hexose transport activator protein (AHT1).